A 171-amino-acid polypeptide reads, in one-letter code: Transcription elongation factor GreB (171 aa).

Positions 53-75 form a coiled coil; that stretch reads KKRLREIDRRVRFLAKRLEVLKI.

Belongs to the GreA/GreB family. GreB subfamily.

Its function is as follows. Necessary for efficient RNA polymerase transcription elongation past template-encoded arresting sites. The arresting sites in DNA have the property of trapping a certain fraction of elongating RNA polymerases that pass through, resulting in locked ternary complexes. Cleavage of the nascent transcript by cleavage factors such as GreA or GreB allows the resumption of elongation from the new 3'terminus. GreB releases sequences of up to 9 nucleotides in length. The sequence is that of Transcription elongation factor GreB from Yersinia pestis.